The primary structure comprises 153 residues: UPF0756 membrane protein lwe1581 (153 aa).

4 helical membrane-spanning segments follow: residues Met6–Ile26, Trp54–Phe74, Ser80–Ala100, and Leu117–Ile137.

The protein belongs to the UPF0756 family.

Its subcellular location is the cell membrane. The polypeptide is UPF0756 membrane protein lwe1581 (Listeria welshimeri serovar 6b (strain ATCC 35897 / DSM 20650 / CCUG 15529 / CIP 8149 / NCTC 11857 / SLCC 5334 / V8)).